Reading from the N-terminus, the 536-residue chain is Zinc finger protein 623 (536 aa).

Residues 57-77 are disordered; the sequence is GELLGNPEGQSLGSSPSQDRG. The span at 64–74 shows a compositional bias: polar residues; the sequence is EGQSLGSSPSQ. 13 consecutive C2H2-type zinc fingers follow at residues 123 to 145, 151 to 173, 179 to 201, 207 to 229, 235 to 257, 263 to 285, 291 to 313, 319 to 341, 347 to 369, 375 to 397, 403 to 425, 431 to 453, and 459 to 481; these read NPCD…RISH, YTCD…QRIH, YVCN…QRVH, FKCA…QRVH, FECK…QRIH, YECN…YQIH, YECK…QRIH, FECN…QRIH, YVCN…QRIH, YECN…QKIH, YECK…QKIH, FECK…QIIH, and YVCS…QKIH. Residue Lys445 forms a Glycyl lysine isopeptide (Lys-Gly) (interchain with G-Cter in SUMO2) linkage. The disordered stretch occupies residues 513-536; it reads LSLSKAPIHLGERSVDKGEHTGNL. A compositionally biased stretch (basic and acidic residues) spans 522–536; the sequence is LGERSVDKGEHTGNL.

This sequence belongs to the krueppel C2H2-type zinc-finger protein family.

It localises to the nucleus. Its function is as follows. May be involved in transcriptional regulation. This chain is Zinc finger protein 623 (ZNF623), found in Homo sapiens (Human).